A 302-amino-acid polypeptide reads, in one-letter code: Gap junction delta-2 protein (302 aa).

The Cytoplasmic portion of the chain corresponds to 1–19 (MGEWTILERLLEAAVQQHS). Residues 20–42 (TMIGRILLTVVVIFRILVVAIVG) form a helical membrane-spanning segment. The Extracellular segment spans residues 43 to 75 (ETVYDDEQTMFVCNTLQPGCNQACYDKAFPISH). Residues 76–98 (IRYWVFQIIMVCTPSLCFITYSV) form a helical membrane-spanning segment. Over 99–177 (HQSSKQRERQ…KIRRQEGISR (79 aa)) the chain is Cytoplasmic. The helical transmembrane segment at 178–200 (FYIIQVVFRNALEIGFLMGQYFL) threads the bilayer. Over 201–232 (YGFKVPSMYECNRYPCVKMVECYVSRPTEKTV) the chain is Extracellular. A helical membrane pass occupies residues 233–255 (FLVFMFAVSGLCVILNLAELNHL). The Cytoplasmic portion of the chain corresponds to 256–302 (GWRKIKTAVRGAQERRKSIYEIRNKDSPHRIGVPNFGRTQSSDSAYV).

This sequence belongs to the connexin family. Delta-type subfamily. As to quaternary structure, a connexon is composed of a hexamer of connexins. In terms of tissue distribution, retinal specific.

Its subcellular location is the cell membrane. The protein localises to the cell junction. It localises to the gap junction. One gap junction consists of a cluster of closely packed pairs of transmembrane channels, the connexons, through which materials of low MW diffuse from one cell to a neighboring cell. This chain is Gap junction delta-2 protein, found in Leucoraja erinaceus (Little skate).